Reading from the N-terminus, the 262-residue chain is Zinc-finger homeodomain protein 6 (262 aa).

Composition is skewed to basic and acidic residues over residues 1 to 25 and 36 to 47; these read MEVREKKDEKMEMTRRKSSALDHHR and NKEKPTTKRNGS. A disordered region spans residues 1-93; it reads MEVREKKDEK…ECQKNHAASS (93 aa). The ZF-HD dimerization-type; degenerate zinc-finger motif lies at 82-131; it reads YRECQKNHAASSGGHVVDGCGEFMSSGEEGTVESLLCAACDCHRSFHRKE. Positions 198-261 form a DNA-binding region, homeobox; sequence KKRFRTKFNE…NNKQAAKKKD (64 aa).

As to quaternary structure, homo- and heterodimer with other ZFHD proteins. Interacts with MIF1 and MIF3; these interactions prevent nuclear localization and DNA-binding to inhibit transcription regulation activity. Binds to ZHD1, ZHD2, ZHD10 and ZHD11. Expressed in seedlings, roots, leaves, stems, flowers and inflorescence.

The protein localises to the nucleus. In terms of biological role, putative transcription factor. This Arabidopsis thaliana (Mouse-ear cress) protein is Zinc-finger homeodomain protein 6 (ZHD6).